Consider the following 215-residue polypeptide: Urease accessory protein UreG (215 aa).

GTP is bound at residue 24 to 31; that stretch reads GPVGSGKT.

The protein belongs to the SIMIBI class G3E GTPase family. UreG subfamily. As to quaternary structure, homodimer. UreD, UreF and UreG form a complex that acts as a GTP-hydrolysis-dependent molecular chaperone, activating the urease apoprotein by helping to assemble the nickel containing metallocenter of UreC. The UreE protein probably delivers the nickel.

It localises to the cytoplasm. In terms of biological role, facilitates the functional incorporation of the urease nickel metallocenter. This process requires GTP hydrolysis, probably effectuated by UreG. The polypeptide is Urease accessory protein UreG (Burkholderia ambifaria (strain MC40-6)).